An 874-amino-acid polypeptide reads, in one-letter code: Speckle targeted PIP5K1A-regulated poly(A) polymerase (874 aa).

Residues 16–46 (FRCCLCHVTTANRPSLDAHLGGRKHRHLVEL) form a Matrin-type zinc finger. The region spanning 56-128 (RSVFVSGFPR…HRLRVRPREQ (73 aa)) is the RRM domain. A disordered region spans residues 113–146 (QHSLGGHRLRVRPREQKEFQSPASKSPKGAAPDS). Serine 205 is a binding site for ATP. 2 residues coordinate Mg(2+): aspartate 216 and aspartate 218. Residues aspartate 216 and aspartate 218 each coordinate UTP. Residues 252–334 (QALACTPASP…ELAETPKEEK (83 aa)) are disordered. Over residues 259 to 269 (ASPPDSQPPAS) the composition is skewed to pro residues. Polar residues predominate over residues 280 to 291 (TPSSSLAPQTPD). Asparagine 392 contacts ATP. Residues asparagine 392, arginine 414, tyrosine 432, and histidine 549 each contribute to the UTP site. Residues 491-549 (LSSLLAQFFSCVSCWDLRGSLLSLREGQALPVAGGLPSNLWEGLRLGPLNLQDPFDLSH) enclose the PAP-associated domain. The interval 598 to 874 (SSPSSLLSAT…FLPQAIRHLK (277 aa)) is KA1; binds the bulging loops of U6 snRNA but is dispensable for terminal uridylyltransferase activity. Disordered regions lie at residues 638-662 (ATKRTRSEGGGTGESSQGGTSKRLK) and 705-761 (MQSP…ASLP). Position 750 is a phosphoserine (serine 750).

Belongs to the DNA polymerase type-B-like family. In terms of assembly, associates with the cleavage and polyadenylation specificity factor (CPSF) complex. Interacts with CPSF1 and CPSF3; the interaction is direct. Interacts with PIP5K1A. The cofactor is Mg(2+). It depends on Mn(2+) as a cofactor. Post-translationally, phosphorylated by CK1 in the proline-rich (Pro-rich) region. In terms of tissue distribution, widely expressed.

The protein resides in the nucleus. It localises to the nucleolus. The protein localises to the nucleus speckle. The catalysed reaction is RNA(n) + UTP = RNA(n)-3'-uridine ribonucleotide + diphosphate. The enzyme catalyses RNA(n) + ATP = RNA(n)-3'-adenine ribonucleotide + diphosphate. Adenylyltransferase activity is specifically phosphatidylinositol 4,5-bisphosphate (PtdIns(4,5)P2). In terms of biological role, poly(A) polymerase that creates the 3'-poly(A) tail of specific pre-mRNAs. Localizes to nuclear speckles together with PIP5K1A and mediates polyadenylation of a select set of mRNAs, such as HMOX1. In addition to polyadenylation, it is also required for the 3'-end cleavage of pre-mRNAs: binds to the 3'UTR of targeted pre-mRNAs and promotes the recruitment and assembly of the CPSF complex on the 3'UTR of pre-mRNAs. In addition to adenylyltransferase activity, also has uridylyltransferase activity. However, the ATP ratio is higher than UTP in cells, suggesting that it functions primarily as a poly(A) polymerase. Acts as a specific terminal uridylyltransferase for U6 snRNA in vitro: responsible for a controlled elongation reaction that results in the restoration of the four 3'-terminal UMP-residues found in newly transcribed U6 snRNA. Not involved in replication-dependent histone mRNA degradation. In Homo sapiens (Human), this protein is Speckle targeted PIP5K1A-regulated poly(A) polymerase (TUT1).